Consider the following 132-residue polypeptide: Small ribosomal subunit protein uS8 (132 aa).

Belongs to the universal ribosomal protein uS8 family. As to quaternary structure, part of the 30S ribosomal subunit. Contacts proteins S5 and S12.

Its function is as follows. One of the primary rRNA binding proteins, it binds directly to 16S rRNA central domain where it helps coordinate assembly of the platform of the 30S subunit. The polypeptide is Small ribosomal subunit protein uS8 (Paramagnetospirillum magneticum (strain ATCC 700264 / AMB-1) (Magnetospirillum magneticum)).